A 354-amino-acid polypeptide reads, in one-letter code: UDP-N-acetylglucosamine--N-acetylmuramyl-(pentapeptide) pyrophosphoryl-undecaprenol N-acetylglucosamine transferase (354 aa).

UDP-N-acetyl-alpha-D-glucosamine contacts are provided by residues 11-13 (TAG), Arg164, Ser194, and Gln289.

It belongs to the glycosyltransferase 28 family. MurG subfamily.

The protein localises to the cell membrane. The enzyme catalyses di-trans,octa-cis-undecaprenyl diphospho-N-acetyl-alpha-D-muramoyl-L-alanyl-D-glutamyl-meso-2,6-diaminopimeloyl-D-alanyl-D-alanine + UDP-N-acetyl-alpha-D-glucosamine = di-trans,octa-cis-undecaprenyl diphospho-[N-acetyl-alpha-D-glucosaminyl-(1-&gt;4)]-N-acetyl-alpha-D-muramoyl-L-alanyl-D-glutamyl-meso-2,6-diaminopimeloyl-D-alanyl-D-alanine + UDP + H(+). Its pathway is cell wall biogenesis; peptidoglycan biosynthesis. Cell wall formation. Catalyzes the transfer of a GlcNAc subunit on undecaprenyl-pyrophosphoryl-MurNAc-pentapeptide (lipid intermediate I) to form undecaprenyl-pyrophosphoryl-MurNAc-(pentapeptide)GlcNAc (lipid intermediate II). The protein is UDP-N-acetylglucosamine--N-acetylmuramyl-(pentapeptide) pyrophosphoryl-undecaprenol N-acetylglucosamine transferase of Clostridium botulinum (strain 657 / Type Ba4).